Consider the following 342-residue polypeptide: Trans-3-hydroxy-L-proline dehydratase (342 aa).

The active-site Proton acceptor is S90. Substrate is bound by residues 91-92 (GS), D252, and 257-258 (GT).

This sequence belongs to the proline racemase family.

It catalyses the reaction trans-3-hydroxy-L-proline = 1-pyrroline-2-carboxylate + H2O. In terms of biological role, catalyzes the dehydration of trans-3-hydroxy-L-proline (t3LHyp) to Delta(1)-pyrroline-2-carboxylate (Pyr2C). Is likely involved in a degradation pathway that converts t3LHyp to L-proline. Displays neither proline racemase activity nor 4-hydroxyproline 2-epimerase activity. This chain is Trans-3-hydroxy-L-proline dehydratase, found in Allorhizobium ampelinum (strain ATCC BAA-846 / DSM 112012 / S4) (Agrobacterium vitis (strain S4)).